Here is a 2380-residue protein sequence, read N- to C-terminus: Probable polyketide synthase 25 (2380 aa).

The segment covering 1-18 (MDNSYLNNPQFDINNGNK) has biased composition (polar residues). Residues 1–29 (MDNSYLNNPQFDINNGNKEVTDDDNNKNN) form a disordered region. Residues 31–457 (DNLVAIVGVG…GSNCCLVLSQ (427 aa)) form the Ketosynthase family 3 (KS3) domain. Active-site for beta-ketoacyl synthase activity residues include cysteine 198, histidine 340, and histidine 380. An acyl/malonyl transferase region spans residues 649–682 (GIKASFMLGHSLGEVTTAYCSGMIDIDQLCYLIY). Serine 659 acts as the For acyl/malonyl transferase activity in catalysis. Residues 948–1070 (ISILGNSMQD…ANFQLYNNGK (123 aa)) form an N-terminal hotdog fold region. The PKS/mFAS DH domain maps to 948 to 1234 (ISILGNSMQD…CTSLTPVKDP (287 aa)). Histidine 982 (proton acceptor; for dehydratase activity) is an active-site residue. Residues 1085 to 1234 (NLSSIPWDKF…CTSLTPVKDP (150 aa)) form a C-terminal hotdog fold region. The Proton donor; for dehydratase activity role is filled by aspartate 1148. Residues 2299–2376 (KNSTNIKDKF…MVCQIINDNF (78 aa)) enclose the Carrier domain. Position 2336 is an O-(pantetheine 4'-phosphoryl)serine (serine 2336).

Requires pantetheine 4'-phosphate as cofactor.

In terms of biological role, probable polyketide synthase. The sequence is that of Probable polyketide synthase 25 (pks25) from Dictyostelium discoideum (Social amoeba).